Consider the following 708-residue polypeptide: Ion-translocating oxidoreductase complex subunit C (708 aa).

2 4Fe-4S ferredoxin-type domains span residues 369 to 397 (GEPQEEQSCIRCSACADACPADLLPQQLY) and 407 to 436 (KATTHNIADCIECGACAWVCPSNIPLVQYF). [4Fe-4S] cluster-binding residues include Cys-377, Cys-380, Cys-383, Cys-387, Cys-416, Cys-419, Cys-422, and Cys-426. Residues 630–682 (AKARKLEQQQANAEPEEQIDPRKAAVEAAIARAKARKLEQQQANAEPEEQIDP) form a disordered region.

Belongs to the 4Fe4S bacterial-type ferredoxin family. RnfC subfamily. In terms of assembly, the complex is composed of six subunits: RsxA, RsxB, RsxC, RsxD, RsxE and RsxG. It depends on [4Fe-4S] cluster as a cofactor.

The protein resides in the cell inner membrane. Its function is as follows. Part of a membrane-bound complex that couples electron transfer with translocation of ions across the membrane. Required to maintain the reduced state of SoxR. The chain is Ion-translocating oxidoreductase complex subunit C from Escherichia coli (strain UTI89 / UPEC).